The sequence spans 251 residues: Cytochrome P450 monooxygenase ppzG (251 aa).

Cys250 contacts heme.

The protein belongs to the cytochrome P450 family. Heme is required as a cofactor.

Its pathway is secondary metabolite biosynthesis. Its function is as follows. Cytochrome P450 monooxygenase; part of the gene cluster that mediates the biosynthesis of pyrrolopyrazines, secondary metabolites showing insecticidal activity. The role of ppzG within the pathway has still to be determined. The single multifunctional NRPS ppzA is sufficient to produce peramine via condensation of 1-pyrroline-5-carboxylate and arginine, N-methylation of the alpha-amino group of arginine and reduction of the thioester and the cyclization to form an iminium ion resulting in release from the peptide synthetase. Deprotonation of this intermediate and oxidation of the pyrroline ring would give rise to peramine. In Epichloe species that produce only peramine, the peramine synthetase gene is not localized in a gene cluster, in contrast to Metarhizium species that contain additional pyrrolopyrazine biosynthesis genes. The 2-oxoglutarate-Fe(II) type oxidoreductase ppzC hydroxylates peramine to yield the newly identified compound 8-hydroxyperamine whereas ppzD converts L-proline into trans-4-hydroxy-L-proline, a precursor of peramine biosynthesis. The sequence is that of Cytochrome P450 monooxygenase ppzG from Metarhizium rileyi (strain RCEF 4871) (Nomuraea rileyi).